Reading from the N-terminus, the 378-residue chain is Quinolinate synthase (378 aa).

Positions 59 and 80 each coordinate iminosuccinate. Residue Cys125 participates in [4Fe-4S] cluster binding. Iminosuccinate is bound by residues 151–153 (YAN) and Ser168. Cys212 serves as a coordination point for [4Fe-4S] cluster. Iminosuccinate is bound by residues 238-240 (HPE) and Thr255. Cys309 lines the [4Fe-4S] cluster pocket.

The protein belongs to the quinolinate synthase family. Type 1 subfamily. It depends on [4Fe-4S] cluster as a cofactor.

It is found in the cytoplasm. It catalyses the reaction iminosuccinate + dihydroxyacetone phosphate = quinolinate + phosphate + 2 H2O + H(+). It functions in the pathway cofactor biosynthesis; NAD(+) biosynthesis; quinolinate from iminoaspartate: step 1/1. In terms of biological role, catalyzes the condensation of iminoaspartate with dihydroxyacetone phosphate to form quinolinate. This chain is Quinolinate synthase, found in Burkholderia mallei (strain NCTC 10247).